The following is a 2290-amino-acid chain: Protein Ycf2 (2290 aa).

An ATP-binding site is contributed by 1644-1651 (GSIGTGRS).

It belongs to the Ycf2 family.

It localises to the plastid. Its subcellular location is the chloroplast stroma. Its function is as follows. Probable ATPase of unknown function. Its presence in a non-photosynthetic plant (Epifagus virginiana) and experiments in tobacco indicate that it has an essential function which is probably not related to photosynthesis. The sequence is that of Protein Ycf2 from Barbarea verna (Land cress).